The sequence spans 216 residues: Orotate phosphoribosyltransferase (216 aa).

A 5-phospho-alpha-D-ribose 1-diphosphate-binding site is contributed by K30. 38–39 (FF) contacts orotate. 5-phospho-alpha-D-ribose 1-diphosphate is bound by residues 75-76 (YK), R102, K103, K106, H108, and 128-136 (DDVITAGTA). The orotate site is built by T132 and R160.

It belongs to the purine/pyrimidine phosphoribosyltransferase family. PyrE subfamily. Homodimer. It depends on Mg(2+) as a cofactor.

It carries out the reaction orotidine 5'-phosphate + diphosphate = orotate + 5-phospho-alpha-D-ribose 1-diphosphate. It participates in pyrimidine metabolism; UMP biosynthesis via de novo pathway; UMP from orotate: step 1/2. Its function is as follows. Catalyzes the transfer of a ribosyl phosphate group from 5-phosphoribose 1-diphosphate to orotate, leading to the formation of orotidine monophosphate (OMP). The protein is Orotate phosphoribosyltransferase of Acinetobacter baylyi (strain ATCC 33305 / BD413 / ADP1).